Consider the following 363-residue polypeptide: 3-isopropylmalate dehydrogenase (363 aa).

78–91 (GKKWDTLPINERPE) contributes to the NAD(+) binding site. Residues R99, R109, R138, and D227 each coordinate substrate. 3 residues coordinate Mg(2+): D227, D251, and D255. Residue 285 to 297 (GSAPDIQGKNIAN) participates in NAD(+) binding.

It belongs to the isocitrate and isopropylmalate dehydrogenases family. LeuB type 1 subfamily. In terms of assembly, homodimer. It depends on Mg(2+) as a cofactor. Requires Mn(2+) as cofactor.

The protein resides in the cytoplasm. The catalysed reaction is (2R,3S)-3-isopropylmalate + NAD(+) = 4-methyl-2-oxopentanoate + CO2 + NADH. Its pathway is amino-acid biosynthesis; L-leucine biosynthesis; L-leucine from 3-methyl-2-oxobutanoate: step 3/4. In terms of biological role, catalyzes the oxidation of 3-carboxy-2-hydroxy-4-methylpentanoate (3-isopropylmalate) to 3-carboxy-4-methyl-2-oxopentanoate. The product decarboxylates to 4-methyl-2 oxopentanoate. This chain is 3-isopropylmalate dehydrogenase, found in Buchnera aphidicola subsp. Diuraphis noxia.